Reading from the N-terminus, the 196-residue chain is Small ribosomal subunit protein uS4c (196 aa).

The span at 1 to 14 (MSRYRGPRLKKIRR) shows a compositional bias: basic residues. The disordered stretch occupies residues 1-43 (MSRYRGPRLKKIRRLGALPGLTRKTPKSGSNPKKKFHSGKKEQ). Residues 89–169 (MRLDNILFRL…LPKHLTIDTL (81 aa)) form the S4 RNA-binding domain.

It belongs to the universal ribosomal protein uS4 family. In terms of assembly, part of the 30S ribosomal subunit. Contacts protein S5. The interaction surface between S4 and S5 is involved in control of translational fidelity.

The protein localises to the plastid. It localises to the chloroplast. One of the primary rRNA binding proteins, it binds directly to 16S rRNA where it nucleates assembly of the body of the 30S subunit. Its function is as follows. With S5 and S12 plays an important role in translational accuracy. The sequence is that of Small ribosomal subunit protein uS4c (rps4) from Melica uniflora (Wood melick grass).